The chain runs to 1320 residues: Sister chromatid cohesion protein PDS5 homolog A (1320 aa).

HEAT repeat units lie at residues 156-195, 272-310, 388-426, 709-747, and 990-1028; these read NEIF…EGDG, PLLL…AKDS, NLVN…KYCL, PQIR…NKEV, and SLLP…CLWF. A compositionally biased stretch (polar residues) spans 1158-1179; the sequence is TFTSETGSNASTNSQPSSPATN. The disordered stretch occupies residues 1158-1320; that stretch reads TFTSETGSNA…APQRQIDLQR (163 aa). Positions 1180-1194 are enriched in basic and acidic residues; it reads KSRDVSSEVGARENE. Positions 1225–1241 are enriched in polar residues; sequence GTENSVSSNPSAGSQPP. Residues 1255-1267 are compositionally biased toward low complexity; that stretch reads AGAATQEKEAGAT. Polar residues predominate over residues 1283–1293; sequence QDPSSTASTDA. Positions 1294–1309 are enriched in basic and acidic residues; sequence LSDKTPKQQKEAEPKR.

The protein belongs to the PDS5 family. In terms of assembly, interacts with the cohesin complex. Binds chromatin in a cohesin-dependent manner.

Its subcellular location is the nucleus. Its function is as follows. May regulate sister chromatid cohesion during mitosis and couple it to DNA replication. The chain is Sister chromatid cohesion protein PDS5 homolog A from Danio rerio (Zebrafish).